A 479-amino-acid polypeptide reads, in one-letter code: Adenosylhomocysteinase (479 aa).

Positions 65, 144, and 204 each coordinate substrate. 205 to 207 (TTT) contacts NAD(+). Substrate is bound by residues lysine 234 and aspartate 238. NAD(+) contacts are provided by residues asparagine 239, 268–273 (GYGDVG), glutamate 291, asparagine 326, 347–349 (IGH), and asparagine 392.

This sequence belongs to the adenosylhomocysteinase family. NAD(+) serves as cofactor.

It is found in the cytoplasm. The enzyme catalyses S-adenosyl-L-homocysteine + H2O = L-homocysteine + adenosine. It participates in amino-acid biosynthesis; L-homocysteine biosynthesis; L-homocysteine from S-adenosyl-L-homocysteine: step 1/1. Its function is as follows. May play a key role in the regulation of the intracellular concentration of adenosylhomocysteine. The protein is Adenosylhomocysteinase of Variovorax paradoxus (strain S110).